The primary structure comprises 780 residues: Cullin-5 (780 aa).

S34 bears the Phosphoserine mark. Phosphothreonine is present on T210. Residues 711 to 772 form the Cullin neddylation domain; the sequence is RILRTQEAII…HRYIRRDEAD (62 aa). K724 participates in a covalent cross-link: Glycyl lysine isopeptide (Lys-Gly) (interchain with G-Cter in NEDD8).

It belongs to the cullin family. As to quaternary structure, component of multiple cullin-5-RING E3 ubiquitin-protein ligase complexes (ECS complexes, also named CRL5 complexes) formed of CUL5, Elongin BC (ELOB and ELOC), RNF7/RBX2 and a variable SOCS box domain-containing protein as substrate-specific recognition component. CUL5-containing ECS complexes specifically contain RNF7/RBX2, and not RBX1, as catalytic subunit. Component of the ECS(ASB2) complex with the substrate recognition component ASB2. Component of the ECS(ASB6) complex with the substrate recognition component ASB6. Component of the ECS(ASB7) complex with the substrate recognition component ASB7. Component of the ECS(ASB9) complex with the substrate recognition component ASB9. Component of the ECS(ASB11) complex with the substrate recognition component ASB11. Component of the ECS(ASB12) complex with the substrate recognition component ASB12. Component of the ECS(LRRC41) complex with the substrate recognition component LRRC41. Component of the ECS(SOCS1) complex with the substrate recognition component SOCS1. Component of the ECS(SOCS2) complex with the substrate recognition component SOCS2. Component of the ECS(WSB1) complex with the substrate recognition subunit WSB1. Component of the ECS(SOCS3) complex with the substrate recognition component SOCS3. Component of the ECS(SOCS7) complex with the substrate recognition component SOCS7. Component of the ECS(SPSB1) complex with the substrate recognition component SPSB1. Component of the ECS(SPSB3) complex with the substrate recognition component SPSB3. Component of the ECS(SPSB2) complex with the substrate recognition component SPSB2. Component of the ECS(SPSB4) complex with the substrate recognition component SPSB4. Component of the ECS(RAB40) complex with the substrate recognition subunit RAB40A, RAB40B or RAB40C. Component of the ECS(KLHDC1) complex with the substrate recognition component KLHDC1. Component of the ECS(PCMTD1) complex with the substrate recognition subunit PCMTD1. May also form complexes containing RBX1 and ELOA or VHL; additional evidence is however required to confirm this result in vivo. Interacts (when neddylated) with ARIH2; leading to activate the E3 ligase activity of ARIH2. Interacts with ERCC6; the interaction is induced by DNA damaging agents or inhibitors of RNA polymerase II elongation. Interacts with ELOA (via the BC-box). Interacts (unneddylated form) with DCUN1D1, DCUN1D2, DCUN1D3, DCUN1D4 and DCUN1D5; these interactions promote the cullin neddylation. In terms of processing, neddylated; which enhances the ubiquitination activity of ECS complexes and prevents binding of the inhibitor CAND1. Deneddylated via its interaction with the COP9 signalosome (CSN).

The protein localises to the nucleus. Its pathway is protein modification; protein ubiquitination. Its function is as follows. Core component of multiple cullin-5-RING E3 ubiquitin-protein ligase complexes (ECS complexes, also named CRL5 complexes), which mediate the ubiquitination and subsequent proteasomal degradation of target proteins. Acts a scaffold protein that contributes to catalysis through positioning of the substrate and the ubiquitin-conjugating enzyme. The functional specificity of the E3 ubiquitin-protein ligase complex depends on the variable SOCS box-containing substrate recognition component. Acts as a key regulator of neuron positioning during cortex development: component of various SOCS-containing ECS complexes, such as the ECS(SOCS7) complex, that regulate reelin signaling by mediating ubiquitination and degradation of DAB1. ECS(SOCS1) seems to direct ubiquitination of JAK2. The ECS(SOCS2) complex mediates the ubiquitination and subsequent proteasomal degradation of phosphorylated EPOR and GHR. The ECS(SPSB3) complex catalyzes ubiquitination of nuclear CGAS. ECS(KLHDC1) complex is part of the DesCEND (destruction via C-end degrons) pathway and mediates ubiquitination and degradation of truncated SELENOS selenoprotein produced by failed UGA/Sec decoding, which ends with a glycine. The ECS(ASB9) complex mediates ubiquitination and degradation of CKB. As part of some ECS complex, promotes 'Lys-11'-linked ubiquitination and degradation of BTRC. As part of a multisubunit ECS complex, polyubiquitinates monoubiquitinated POLR2A. As part of the ECS(RAB40C) complex, mediates ANKRD28 ubiquitination and degradation, thereby regulating protein phosphatase 6 (PP6) complex activity and focal adhesion assembly during cell migration. As part of the ECS(RAB40A) complex, mediates RHOU 'Lys-48'-linked ubiquitination and degradation, thus inhibiting focal adhesion disassembly during cell migration. As part of the ECS(RAB40B) complex, mediates LIMA1/EPLIN and RAP2 ubiquitination, thereby regulating actin cytoskeleton dynamics and stress fiber formation during cell migration. May form a cell surface vasopressin receptor. In Mus musculus (Mouse), this protein is Cullin-5.